A 200-amino-acid chain; its full sequence is Nucleoplasmin (200 aa).

A2 bears the N-acetylalanine mark. Residue S3 is modified to Phosphoserine. Residue T4 is modified to Phosphothreonine. Phosphoserine is present on S6. Residue T8 is modified to Phosphothreonine. Positions 35-39 are acidic tract A1; it reads EDDEE. The segment covering 123–148 has biased composition (acidic residues); it reads DYSWAEEEDEGEAEGEEEEEEEEDQE. The tract at residues 123–200 is disordered; that stretch reads DYSWAEEEDE…GRGRKPAAKK (78 aa). The interval 128–148 is acidic tract A2; the sequence is EEEDEGEAEGEEEEEEEEDQE. Phosphoserine is present on S149. Basic residues predominate over residues 153 to 170; sequence AVKRPAATKKAGQAKKKK. The Bipartite nuclear localization signal signature appears at 155–170; sequence KRPAATKKAGQAKKKK. The segment at 174–176 is acidic tract A3; sequence EDE. A phosphoserine mark is found at S177, S178, and S182. The segment covering 185–200 has biased composition (basic residues); sequence KKGKGAGRGRKPAAKK. R192 is modified (omega-N-methylarginine; by PRMT5; alternate). The residue at position 192 (R192) is a Symmetric dimethylarginine; by PRMT5; alternate.

This sequence belongs to the nucleoplasmin family. As to quaternary structure, homopentamer, when bound to H2A-H2B dimers only. Homodecamer of two stacked pentamers, when bound to H2A-H2B dimers and H3-H4 tetramers simultaneously. Interacts with the heterotetramer formed by wdr77 and prmt5. Post-translationally, activated by phosphorylation of multiple serine/threonine residues, along both core and tail domains. The level of phosphorylation gradually increases during egg maturation, reaching an average of 7-10 phosphates per monomer, so that at the time of fertilization the activity of the protein is maximum. In terms of processing, methylated by prmt5, yielding both monomethylated and symmetrically dimethylated Arg-192.

The protein localises to the nucleus. In terms of biological role, acts as a chaperone for histones, such as histone H2A-H2B, and thus regulates the assembly of nucleosome cores. Involved in chromatin remodeling, especially during fertilization and early embryonic development. May be involved in sperm chromatin decondensation during fertilization. The protein is Nucleoplasmin of Xenopus laevis (African clawed frog).